The following is a 301-amino-acid chain: Polyamine aminopropyltransferase (301 aa).

The PABS domain maps to 4-240 (WHWLLEWQTP…GLWGFVYGGV (237 aa)). Residue Gln33 participates in S-methyl-5'-thioadenosine binding. Spermidine-binding residues include His64 and Glu89. S-methyl-5'-thioadenosine contacts are provided by residues Asp109 and 141–142 (DG). Asp159 acts as the Proton acceptor in catalysis.

It belongs to the spermidine/spermine synthase family. Homodimer or homotetramer.

The protein resides in the cytoplasm. The enzyme catalyses S-adenosyl 3-(methylsulfanyl)propylamine + putrescine = S-methyl-5'-thioadenosine + spermidine + H(+). The protein operates within amine and polyamine biosynthesis; spermidine biosynthesis; spermidine from putrescine: step 1/1. Functionally, catalyzes the irreversible transfer of a propylamine group from the amino donor S-adenosylmethioninamine (decarboxy-AdoMet) to putrescine (1,4-diaminobutane) to yield spermidine. The chain is Polyamine aminopropyltransferase from Saccharolobus islandicus (strain L.S.2.15 / Lassen #1) (Sulfolobus islandicus).